The following is a 170-amino-acid chain: MTASTSSTPSTSTKIPSSSKSSVTKQTKQKRNERERKRVDQVNQGFVLLQERVPKAAGNKAKLSKVETLREAARYIQELQKQLGMSSTSFHNSMPADFPTPEQSPVYPQSVCSMMAQTPSPSYTSPYYPPPQMMSSNQHDMSSHYYQESSSSSASTSGDHHSFYSHTETY.

Low complexity predominate over residues 1-26 (MTASTSSTPSTSTKIPSSSKSSVTKQ). Disordered stretches follow at residues 1–42 (MTAS…VDQV) and 118–170 (TPSP…TETY). Positions 26–39 (QTKQKRNERERKRV) are basic motif; degenerate. The region spanning 26-79 (QTKQKRNERERKRVDQVNQGFVLLQERVPKAAGNKAKLSKVETLREAARYIQEL) is the bHLH domain. Positions 30–40 (KRNERERKRVD) are enriched in basic and acidic residues. The segment at 40–79 (DQVNQGFVLLQERVPKAAGNKAKLSKVETLREAARYIQEL) is helix-loop-helix motif. The segment covering 143-157 (SHYYQESSSSSASTS) has biased composition (low complexity).

As to quaternary structure, efficient DNA binding requires dimerization with another bHLH protein. Forms a heterodimer with hlh-2. In terms of tissue distribution, expressed in the ADL sensory neurons.

The protein localises to the nucleus. Its function is as follows. Probable transcriptional regulator. May mediate transcriptional activation by binding to the E-box motif 5'-CANNTG-3'. Plays a role in the differentiation of the hermaphrodite-specific motor neurons (HSN) that are required for normal egg laying. Might play a role in serotonin production by regulating expression of the tryptophan hydrolase tph-1 which catalyzes serotonin synthesis, in the HSN neurons. Also plays a role in HSN axon guidance towards the vulva and the ventral nerve cord, possibly by promoting the expression of the netrin receptor unc-40. Under feeding conditions, involved in the regulation of the srh-234 chemoreceptor encoding gene expression in the ADL sensory neurons. Together with hlh-2, involved in the induction of programmed cell death in the sister cells of the serotonergic neurosecretory motor (NSM) neurons, probably through the activation of egl-1 transcription. The protein is Helix-loop-helix protein 3 of Caenorhabditis elegans.